The chain runs to 1295 residues: Phosphoribosylformylglycinamidine synthase (1295 aa).

Positions serine 302–proline 327 are disordered. Residues glycine 306–aspartate 317 and alanine 677 contribute to the ATP site. Residues aspartate 678, glutamate 717, asparagine 721, and aspartate 884 each contribute to the Mg(2+) site. Position 886 (serine 886) interacts with ATP. The 254-residue stretch at valine 1042 to glycine 1295 folds into the Glutamine amidotransferase type-1 domain. Cysteine 1135 (nucleophile) is an active-site residue. Residues histidine 1260 and glutamate 1262 contribute to the active site.

The protein in the N-terminal section; belongs to the FGAMS family. Monomer.

The protein localises to the cytoplasm. It catalyses the reaction N(2)-formyl-N(1)-(5-phospho-beta-D-ribosyl)glycinamide + L-glutamine + ATP + H2O = 2-formamido-N(1)-(5-O-phospho-beta-D-ribosyl)acetamidine + L-glutamate + ADP + phosphate + H(+). It functions in the pathway purine metabolism; IMP biosynthesis via de novo pathway; 5-amino-1-(5-phospho-D-ribosyl)imidazole from N(2)-formyl-N(1)-(5-phospho-D-ribosyl)glycinamide: step 1/2. In terms of biological role, phosphoribosylformylglycinamidine synthase involved in the purines biosynthetic pathway. Catalyzes the ATP-dependent conversion of formylglycinamide ribonucleotide (FGAR) and glutamine to yield formylglycinamidine ribonucleotide (FGAM) and glutamate. This Photorhabdus laumondii subsp. laumondii (strain DSM 15139 / CIP 105565 / TT01) (Photorhabdus luminescens subsp. laumondii) protein is Phosphoribosylformylglycinamidine synthase.